Consider the following 94-residue polypeptide: MTTGSNDFYYSNKYEDDEYEYRHVHVTKDVAKLIPKNRLMSETEWRSLGIQQSPGWIHYMIHGPERHVLLFRRPLPNAQKTVRGGGGTSAVGVR.

It belongs to the CKS family. In terms of assembly, forms a homohexamer that can probably bind six kinase subunits. Interacts with cdk-1.

The protein resides in the nucleus. Its function is as follows. Binds to the catalytic subunit of the cyclin dependent kinases and is essential for their biological function. Has a role in the exit from M phase during early mitotic cell division. More specifically, thought to act by the degrading B-type cyclins that causes breakdown of nuclear envelope and exit mitosis. In Caenorhabditis briggsae, this protein is Cyclin-dependent kinases regulatory subunit.